Consider the following 133-residue polypeptide: Ribosome-binding factor A (133 aa).

The protein belongs to the RbfA family. As to quaternary structure, monomer. Binds 30S ribosomal subunits, but not 50S ribosomal subunits or 70S ribosomes.

Its subcellular location is the cytoplasm. In terms of biological role, one of several proteins that assist in the late maturation steps of the functional core of the 30S ribosomal subunit. Associates with free 30S ribosomal subunits (but not with 30S subunits that are part of 70S ribosomes or polysomes). Required for efficient processing of 16S rRNA. May interact with the 5'-terminal helix region of 16S rRNA. The sequence is that of Ribosome-binding factor A from Salmonella schwarzengrund (strain CVM19633).